Here is a 471-residue protein sequence, read N- to C-terminus: Protein naked cuticle homolog 1 (471 aa).

2 disordered regions span residues 1–23 (MGKL…GDSF) and 41–82 (QRCP…DEDD). The N-myristoyl glycine moiety is linked to residue Gly-2. Residues 62–75 (GTRELVGDTSREAL) show a composition bias toward basic and acidic residues. The tract at residues 125 to 190 (QCDVSVEEDS…LRVKLTVAPD (66 aa)) is interaction with DVL1, DVL2 and DVL3. The EF-hand domain maps to 131–166 (EEDSRQEWTFTLYDFDNNGKVTREDITSLLHTIYEV). Residues Asp-144, Asp-146, Asn-148, Lys-150, and Asp-155 each contribute to the Ca(2+) site. 3 disordered regions span residues 273-314 (GPGS…QGVD), 337-382 (GTQD…SPSA), and 448-471 (QAVQ…FYQP). The segment covering 453 to 471 (HEHHHHHEHHHHYHHFYQP) has biased composition (basic residues).

Belongs to the NKD family. As to quaternary structure, interacts with DVL1, DVL2, DVL3 and PPP2R3A. Highly expressed in lung. Also expressed in brain, heart, kidney, liver, skin, stomach and testis. Within the testis expression is found in the seminiferous epithelium and round and elongating spermatids.

Its subcellular location is the cell membrane. The protein resides in the cytoplasm. Its function is as follows. Cell autonomous antagonist of the canonical Wnt signaling pathway. May activate a second Wnt signaling pathway that controls planar cell polarity. Required for spermatogenesis. The protein is Protein naked cuticle homolog 1 (Nkd1) of Mus musculus (Mouse).